Here is a 163-residue protein sequence, read N- to C-terminus: MAKKIITVNVNGKAQEKAVEPRTLLIHFLREELNLTGAHIGCETSHCGACTVDIDGRSVKSCTHLAVQCDGSEVLTVEGLANKGVLHAVREGFYKEHGLQCGFCTPGMLMRAYRFLQENPNPTEAEIRMGMTGNLCRCTGYQNIVKAVQYAARKLQEPSTAAA.

Residues 4–80 (KIITVNVNGK…GSEVLTVEGL (77 aa)) form the 2Fe-2S ferredoxin-type domain. C42, C47, C50, C62, C101, C104, C136, and C138 together coordinate [2Fe-2S] cluster.

In terms of assembly, dimer of heterotrimers. Each heterotrimer consists of a large, a medium and a small subunit. Requires [2Fe-2S] cluster as cofactor.

The enzyme catalyses CO + a quinone + H2O = a quinol + CO2. Catalyzes the oxidation of carbon monoxide to carbon dioxide. The protein is Carbon monoxide dehydrogenase small chain (cutS) of Hydrogenophaga pseudoflava (Pseudomonas carboxydoflava).